The primary structure comprises 901 residues: Protein translocase subunit SecA (901 aa).

Residues Gln-85, 103 to 107 (GEGKT), and Asp-510 contribute to the ATP site. Positions 848–901 (RINQNNLPVDENSQTTQNSETEDYSDRRIGRNEPCPCGSGKKYKHCHGSRVARQ) are disordered. Residues 849 to 866 (INQNNLPVDENSQTTQNS) are compositionally biased toward polar residues. Positions 882, 884, 893, and 894 each coordinate Zn(2+). Positions 888–901 (KKYKHCHGSRVARQ) are enriched in basic residues.

This sequence belongs to the SecA family. As to quaternary structure, monomer and homodimer. Part of the essential Sec protein translocation apparatus which comprises SecA, SecYEG and auxiliary proteins SecDF-YajC and YidC. The cofactor is Zn(2+).

The protein resides in the cell inner membrane. Its subcellular location is the cytoplasm. The catalysed reaction is ATP + H2O + cellular proteinSide 1 = ADP + phosphate + cellular proteinSide 2.. Its function is as follows. Part of the Sec protein translocase complex. Interacts with the SecYEG preprotein conducting channel. Has a central role in coupling the hydrolysis of ATP to the transfer of proteins into and across the cell membrane, serving both as a receptor for the preprotein-SecB complex and as an ATP-driven molecular motor driving the stepwise translocation of polypeptide chains across the membrane. This is Protein translocase subunit SecA from Haemophilus influenzae (strain 86-028NP).